Reading from the N-terminus, the 371-residue chain is Protein disulfide isomerase-like 2-2 (371 aa).

The N-terminal stretch at 1–27 (MAIPRISPRKTLPLFAALALALAWAFA) is a signal peptide. 2 consecutive Thioredoxin domains span residues 28-143 (APAF…TEGG) and 147-262 (KLAT…EKCG). Active-site nucleophile residues include Cys-64, Cys-67, Cys-183, and Cys-186. 2 cysteine pairs are disulfide-bonded: Cys-64/Cys-67 and Cys-183/Cys-186.

This sequence belongs to the protein disulfide isomerase family.

The protein localises to the secreted. The catalysed reaction is Catalyzes the rearrangement of -S-S- bonds in proteins.. Its function is as follows. Acts as a protein-folding catalyst that interacts with nascent polypeptides to catalyze the formation, isomerization, and reduction or oxidation of disulfide bonds. May play a role in storage protein biogenesis. In Oryza sativa subsp. japonica (Rice), this protein is Protein disulfide isomerase-like 2-2 (PDIL2-2).